The sequence spans 3284 residues: Location of vulva defective 1 (3284 aa).

The N-terminal stretch at 1 to 21 (MKKSNFFVLLLLAISAIQIDG) is a signal peptide. Disordered regions lie at residues 226-326 (ESTS…ITST), 350-505 (TTML…GTNP), 623-702 (VASS…ADST), 827-926 (STSE…ASTE), and 1043-1216 (TTTE…SLAT). Composition is skewed to low complexity over residues 227 to 326 (STST…ITST) and 350 to 500 (TTML…TTSS). Residues 827 to 913 (STSEVTSTTS…PSDSSSASDS (87 aa)) are compositionally biased toward low complexity. The span at 914 to 926 (MRTTTVDPDASTE) shows a compositional bias: polar residues. Low complexity predominate over residues 1043–1057 (TTTETPPTTVSSSDD). The span at 1060 to 1078 (GKTGGTGATGGTGGTGSGG) shows a compositional bias: gly residues. Low complexity predominate over residues 1079-1104 (SATTLSTGDAVRSTTSGSGSGQSSTG). A compositionally biased stretch (gly residues) spans 1105 to 1127 (SGAGGSGTTASGSGSGGSSGTGS). Residues 1128 to 1138 (DGVNSGKTTAL) are compositionally biased toward polar residues. A compositionally biased stretch (low complexity) spans 1163–1192 (GSGSDSNGSSGVSTKSSSGSDTSGSSDSSG). Over residues 1197 to 1216 (FSATAQPSTRTTKTRSSLAT) the composition is skewed to polar residues. The GAIN-B domain maps to 2064–2227 (WNNSLQVEII…SVGAFNPTID (164 aa)). The cysteines at positions 2181 and 2209 are disulfide-linked. Positions 2181–2227 (CYFYQKTSDVFNSEGMYPSDGQGMQFVNCSTDHLTMFSVGAFNPTID) are GPS. Residues 2245-2265 (VMIAAVFMLVVYGCLTINAII) form a helical membrane-spanning segment. Positions 2288–2411 (YMYVIAVETG…GDGETERLAR (124 aa)) constitute a PLAT domain. Transmembrane regions (helical) follow at residues 2453–2473 (DYSVSIIFSLVVVSMISITIL), 2496–2516 (IAFGVGFGVLITFLNSLHILL), 2557–2577 (IIVFPVLMGLIYISGAGMSLM), 2592–2612 (LILWAVVFEPIKGLIWAFLIL), 2672–2692 (LFITIRDMLCFFASLYIMVML), 2945–2965 (MLYIFFSVLIFVKEIVFYLYG), 2994–3014 (WNFMDLIVGALAVASVLAYTI), 3043–3063 (WEIVFSYCLAGAVFFTSCKMI), 3089–3109 (FGIAFLFFSMTFNSVLYAVLG), and 3144–3164 (FAFVVIMLYMIAGSKLVLQLY).

This sequence belongs to the polycystin family. Interacts (via PLAT domain) with atp-2 (via N-terminus) and with kin-10 (via C-terminus). Interacts (via C-terminus) with isoform a of stam-1/pqn-19 (via C-terminus). In terms of processing, autoproteolytically processed at the GPS region of the GAIN-B domain; this cleavage modulates receptor activity. Exclusively expressed in a subset of three categories of adult male sensory neurons: ray neurons, hook neurons and head cephalic (CEM) neurons.

It is found in the membrane. The protein resides in the cell projection. Its subcellular location is the cilium. Required for two aspects of male mating behavior: response to hermaphrodite contact and vulva location. Acts in the same pathway as pkd-2 and atp-2 in response behavior. May be required for ciliary targeting of pkd-2. The chain is Location of vulva defective 1 (lov-1) from Caenorhabditis elegans.